The chain runs to 127 residues: Small ribosomal subunit protein bS6 (127 aa).

The segment at 102-127 (IMQGAEKGKSSRKEKVDAEAEASEEA) is disordered. Residues 107–119 (EKGKSSRKEKVDA) show a composition bias toward basic and acidic residues.

This sequence belongs to the bacterial ribosomal protein bS6 family.

Binds together with bS18 to 16S ribosomal RNA. In Coxiella burnetii (strain CbuK_Q154) (Coxiella burnetii (strain Q154)), this protein is Small ribosomal subunit protein bS6.